The sequence spans 550 residues: Probable importin subunit alpha-A (550 aa).

The span at 1-30 shows a compositional bias: basic and acidic residues; sequence MSSRDKQDSRKKEFKKSLDSETARRKREEN. Residues 1–34 are disordered; the sequence is MSSRDKQDSRKKEFKKSLDSETARRKREENSIGI. An IBB domain is found at 1-56; it reads MSSRDKQDSRKKEFKKSLDSETARRKREENSIGIRKNAREELMLKRRGIVQPNPST. 8 ARM repeats span residues 116–155, 158–198, 201–241, 256–297, 300–339, 342–381, 385–424, and 428–467; these read YPPI…NIAS, NRQT…NIAG, VDSR…KIGL, KPQP…YLCD, NTKI…NIVT, SSQT…NITA, SQID…NSTN, and TKSI…NIIK.

Belongs to the importin alpha family. Forms a complex with tnpo/importin subunit beta.

The protein localises to the cytoplasm. Its subcellular location is the nucleus envelope. Its function is as follows. Functions in nuclear protein import via a substrate-importin alpha-beta transport complex that passes though the nuclear pore complexes (NPC). Binds specifically and directly to substrates containing either a simple or bipartite NLS motif. The chain is Probable importin subunit alpha-A from Dictyostelium discoideum (Social amoeba).